The sequence spans 260 residues: Snake venom serine protease 2B (260 aa).

Residues 1 to 18 form the signal peptide; it reads MVLIRVLANLLILQLSYA. Residues 19–24 constitute a propeptide that is removed on maturation; it reads QKSSEL. A Peptidase S1 domain is found at 25 to 251; the sequence is VVGGDECNIN…HLDWIQSIIA (227 aa). 6 disulfide bridges follow: Cys-31/Cys-165, Cys-52/Cys-68, Cys-102/Cys-258, Cys-144/Cys-212, Cys-176/Cys-191, and Cys-202/Cys-227. Catalysis depends on His-67, which acts as the Charge relay system. Asn-101 and Asn-105 each carry an N-linked (GlcNAc...) asparagine glycan. The Charge relay system role is filled by Asp-112. Residues Asn-123 and Asn-156 are each glycosylated (N-linked (GlcNAc...) asparagine). The Charge relay system role is filled by Ser-206.

It belongs to the peptidase S1 family. Snake venom subfamily. Monomer. Expressed by the venom gland.

The protein resides in the secreted. In terms of biological role, snake venom serine protease that may act in the hemostasis system of the prey. In Craspedocephalus gramineus (Bamboo pit viper), this protein is Snake venom serine protease 2B (TLG2B).